Consider the following 309-residue polypeptide: tRNA-cytidine(32) 2-sulfurtransferase (309 aa).

The PP-loop motif motif lies at 47–52 (SGGKDS). Residues C122, C125, and C213 each coordinate [4Fe-4S] cluster.

The protein belongs to the TtcA family. Homodimer. The cofactor is Mg(2+). [4Fe-4S] cluster is required as a cofactor.

It localises to the cytoplasm. It catalyses the reaction cytidine(32) in tRNA + S-sulfanyl-L-cysteinyl-[cysteine desulfurase] + AH2 + ATP = 2-thiocytidine(32) in tRNA + L-cysteinyl-[cysteine desulfurase] + A + AMP + diphosphate + H(+). It participates in tRNA modification. Catalyzes the ATP-dependent 2-thiolation of cytidine in position 32 of tRNA, to form 2-thiocytidine (s(2)C32). The sulfur atoms are provided by the cysteine/cysteine desulfurase (IscS) system. The chain is tRNA-cytidine(32) 2-sulfurtransferase from Erwinia tasmaniensis (strain DSM 17950 / CFBP 7177 / CIP 109463 / NCPPB 4357 / Et1/99).